A 185-amino-acid chain; its full sequence is Ribosome-recycling factor (185 aa).

The protein belongs to the RRF family.

It is found in the cytoplasm. Functionally, responsible for the release of ribosomes from messenger RNA at the termination of protein biosynthesis. May increase the efficiency of translation by recycling ribosomes from one round of translation to another. The sequence is that of Ribosome-recycling factor from Saccharophagus degradans (strain 2-40 / ATCC 43961 / DSM 17024).